We begin with the raw amino-acid sequence, 463 residues long: GTPase Der (463 aa).

2 EngA-type G domains span residues 3 to 166 (PVVA…PESG) and 177 to 350 (IRIA…QSAM). GTP-binding positions include 9–16 (GRTNVGKS), 56–60 (DTGGI), 118–121 (NKID), 183–190 (GRPNVGKS), 230–234 (DTAGI), and 295–298 (NKWD). The region spanning 351-435 (LDLSASRLTQ…PLKLVFKSAE (85 aa)) is the KH-like domain.

Belongs to the TRAFAC class TrmE-Era-EngA-EngB-Septin-like GTPase superfamily. EngA (Der) GTPase family. As to quaternary structure, associates with the 50S ribosomal subunit.

In terms of biological role, GTPase that plays an essential role in the late steps of ribosome biogenesis. The sequence is that of GTPase Der from Methylococcus capsulatus (strain ATCC 33009 / NCIMB 11132 / Bath).